The primary structure comprises 121 residues: Ribosome-binding factor A (121 aa).

This sequence belongs to the RbfA family. As to quaternary structure, monomer. Binds 30S ribosomal subunits, but not 50S ribosomal subunits or 70S ribosomes.

Its subcellular location is the cytoplasm. Its function is as follows. One of several proteins that assist in the late maturation steps of the functional core of the 30S ribosomal subunit. Associates with free 30S ribosomal subunits (but not with 30S subunits that are part of 70S ribosomes or polysomes). Required for efficient processing of 16S rRNA. May interact with the 5'-terminal helix region of 16S rRNA. The protein is Ribosome-binding factor A of Brevibacillus brevis (strain 47 / JCM 6285 / NBRC 100599).